Reading from the N-terminus, the 458-residue chain is A-type ATP synthase subunit B (458 aa).

The protein belongs to the ATPase alpha/beta chains family. As to quaternary structure, has multiple subunits with at least A(3), B(3), C, D, E, F, H, I and proteolipid K(x).

It localises to the cell membrane. Functionally, component of the A-type ATP synthase that produces ATP from ADP in the presence of a proton gradient across the membrane. The B chain is a regulatory subunit. In Methanocorpusculum labreanum (strain ATCC 43576 / DSM 4855 / Z), this protein is A-type ATP synthase subunit B.